Consider the following 344-residue polypeptide: Phenylalanine--tRNA ligase alpha subunit (344 aa).

Residue Glu-269 participates in Mg(2+) binding.

This sequence belongs to the class-II aminoacyl-tRNA synthetase family. Phe-tRNA synthetase alpha subunit type 1 subfamily. As to quaternary structure, tetramer of two alpha and two beta subunits. The cofactor is Mg(2+).

The protein resides in the cytoplasm. It catalyses the reaction tRNA(Phe) + L-phenylalanine + ATP = L-phenylalanyl-tRNA(Phe) + AMP + diphosphate + H(+). This Ralstonia pickettii (strain 12J) protein is Phenylalanine--tRNA ligase alpha subunit.